A 492-amino-acid polypeptide reads, in one-letter code: Glutamyl-tRNA(Gln) amidotransferase subunit A (492 aa).

Active-site charge relay system residues include K78 and S158. The active-site Acyl-ester intermediate is S182.

This sequence belongs to the amidase family. GatA subfamily. Heterotrimer of A, B and C subunits.

The catalysed reaction is L-glutamyl-tRNA(Gln) + L-glutamine + ATP + H2O = L-glutaminyl-tRNA(Gln) + L-glutamate + ADP + phosphate + H(+). Functionally, allows the formation of correctly charged Gln-tRNA(Gln) through the transamidation of misacylated Glu-tRNA(Gln) in organisms which lack glutaminyl-tRNA synthetase. The reaction takes place in the presence of glutamine and ATP through an activated gamma-phospho-Glu-tRNA(Gln). This chain is Glutamyl-tRNA(Gln) amidotransferase subunit A, found in Rhodopseudomonas palustris (strain BisB18).